The following is a 620-amino-acid chain: DNA mismatch repair protein MutL (620 aa).

Residues 353–375 (SRANGANDFTGRPFSGTERPRGG) form a disordered region.

Belongs to the DNA mismatch repair MutL/HexB family.

This protein is involved in the repair of mismatches in DNA. It is required for dam-dependent methyl-directed DNA mismatch repair. May act as a 'molecular matchmaker', a protein that promotes the formation of a stable complex between two or more DNA-binding proteins in an ATP-dependent manner without itself being part of a final effector complex. The chain is DNA mismatch repair protein MutL from Chelativorans sp. (strain BNC1).